Reading from the N-terminus, the 157-residue chain is Ubiquitin-like protein 4A (157 aa).

The region spanning 1–76 is the Ubiquitin-like domain; sequence MILTVKPLQG…LNLVVRPAGE (76 aa).

As to quaternary structure, component of the bag6/bat3 complex.

The protein resides in the cytoplasm. Its subcellular location is the cytosol. The protein localises to the nucleus. Its function is as follows. As part of a cytosolic protein quality control complex, the bag6/bat3 complex, maintains misfolded and hydrophobic patches-containing proteins in a soluble state and participates in their proper delivery to the endoplasmic reticulum or alternatively can promote their sorting to the proteasome where they undergo degradation. The bag6/bat3 complex is involved in the post-translational delivery of tail-anchored/type II transmembrane proteins to the endoplasmic reticulum membrane. Similarly, the bag6/bat3 complex also functions as a sorting platform for proteins of the secretory pathway that are mislocalized to the cytosol either delivering them to the proteasome for degradation or to the endoplasmic reticulum. The bag6/bat3 complex also plays a role in the endoplasmic reticulum-associated degradation (ERAD), a quality control mechanism that eliminates unwanted proteins of the endoplasmic reticulum through their retrotranslocation to the cytosol and their targeting to the proteasome. It maintains these retrotranslocated proteins in an unfolded yet soluble state condition in the cytosol to ensure their proper delivery to the proteasome. This is Ubiquitin-like protein 4A (ubl4a) from Danio rerio (Zebrafish).